A 568-amino-acid chain; its full sequence is MEREASSWGLESRDVHSPNAVGSPEGSLKDPAGNTSENEEGEISQREGNGDYEVEEIPFGLEPQSPEFEPQSPEFESQSPRFEPESPGFESRSPGFVPPSPEFAPRSPESDPQSPEFESQSPKYEPRSPGCHPRSPGCEPGSPRYEPKSPGYGSKSPEFESQSPGYESQSPGYEPQNSGDGVQNSEFKTHSPEFETQSSKFQEGAEMPLSPEEKNPLSISLGVHPLDSFTQGFGEQPTGALPPFDMPSGALLAAPQFEMLQNPLNLTGTLRGPGRRGGRARGGQGPRPNICGICGKSFGRGSTLIQHQRIHTGEKPYKCEVCSKAFSQSSDLIKHQRTHTGERPYKCPRCGKAFADSSYLLRHQRTHSGQKPYKCPHCGKAFGDSSYLLRHQRTHSHERPYSCPECGKCYSQNSSLRSHQRVHTGQRPFSCGICGKSFSQRSALIPHARSHAREKPFKCPECGKRFGQSSVLAIHARTHLPGRTYSCPDCGKTFNRSSTLIQHQRSHTGERPYRCAVCGKGFCRSSTLLQHHRVHSGERPYKCDDCGKAFSQSSDLIRHQRTHAAGRR.

Basic and acidic residues predominate over residues 1-16 (MEREASSWGLESRDVH). Disordered regions lie at residues 1-223 (MERE…SLGV), 228-247 (SFTQ…FDMP), and 264-287 (LNLT…QGPR). A phosphoserine mark is found at Ser17, Ser23, and Ser27. Thr35 bears the Phosphothreonine mark. Ser36, Ser65, Ser72, Ser79, Ser86, Ser93, Ser100, Ser107, Ser114, Ser121, Ser128, Ser135, and Ser149 each carry phosphoserine. The segment covering 62–80 (EPQSPEFEPQSPEFESQSP) has biased composition (low complexity). Residues 110–122 (SDPQSPEFESQSP) are compositionally biased toward polar residues. Tyr152 carries the post-translational modification Phosphotyrosine. Phosphoserine is present on Ser154. Over residues 159–186 (FESQSPGYESQSPGYEPQNSGDGVQNSE) the composition is skewed to polar residues. Phosphothreonine is present on Thr189. Ser191 carries the post-translational modification Phosphoserine. The C2H2-type 1 zinc-finger motif lies at 289-311 (NICGICGKSFGRGSTLIQHQRIH). Thr312 bears the Phosphothreonine mark. Phosphotyrosine is present on Tyr317. 4 consecutive C2H2-type zinc fingers follow at residues 317–339 (YKCE…QRTH), 345–367 (YKCP…QRTH), 373–395 (YKCP…QRTH), and 401–423 (YSCP…QRVH). Residues Ser323 and Ser327 each carry the phosphoserine modification. Thr424 bears the Phosphothreonine mark. 5 consecutive C2H2-type zinc fingers follow at residues 429 to 451 (FSCG…ARSH), 457 to 479 (FKCP…ARTH), 485 to 507 (YSCP…QRSH), 513 to 535 (YRCA…HRVH), and 541 to 563 (YKCD…QRTH). Ser470 is modified (phosphoserine).

Belongs to the krueppel C2H2-type zinc-finger protein family. In terms of assembly, interacts (via zinc-finger domains) with TP53 (via N-terminus); interaction might be facilitated by TP53 oligomerization state. Interacts with ELP3. May be phosphorylated at residue 'Ser-5' of the tandem heptapeptide repeats in the N-terminus. Phosphorylation might be increased upon RAS pathway activation and negatively regulate protein stability.

It is found in the nucleus. The protein resides in the chromosome. Binds to mammalian-wide interspersed repeat (MIRs) sequences in euchromatin and promoter regions of genes at the consensus sequence 5'-GCTGTGTG-[N20]-CCTCTCTG-3', consisting of two anchor regions connected by a linker region; the linker region probably does not contribute to the binding specificity. Required for cell homeostasis. May be involved in transcriptional regulation. In Mus musculus (Mouse), this protein is Zinc finger protein 768 (Znf768).